Reading from the N-terminus, the 269-residue chain is Phosphatidylglycerol--prolipoprotein diacylglyceryl transferase (269 aa).

3 helical membrane passes run 21–41, 54–74, and 88–108; these read WYGI…VLEG, LLLY…VVFE, and IWDG…VILI. Position 136 (Arg136) interacts with a 1,2-diacyl-sn-glycero-3-phospho-(1'-sn-glycerol). 2 helical membrane-spanning segments follow: residues 206 to 226 and 236 to 256; these read GEVV…IEGM and LRVS…AIFY.

Belongs to the Lgt family.

Its subcellular location is the cell membrane. It carries out the reaction L-cysteinyl-[prolipoprotein] + a 1,2-diacyl-sn-glycero-3-phospho-(1'-sn-glycerol) = an S-1,2-diacyl-sn-glyceryl-L-cysteinyl-[prolipoprotein] + sn-glycerol 1-phosphate + H(+). Its pathway is protein modification; lipoprotein biosynthesis (diacylglyceryl transfer). Its function is as follows. Catalyzes the transfer of the diacylglyceryl group from phosphatidylglycerol to the sulfhydryl group of the N-terminal cysteine of a prolipoprotein, the first step in the formation of mature lipoproteins. The protein is Phosphatidylglycerol--prolipoprotein diacylglyceryl transferase of Ligilactobacillus salivarius (strain UCC118) (Lactobacillus salivarius).